We begin with the raw amino-acid sequence, 627 residues long: Transketolase-like protein 2 (627 aa).

His-39 is a substrate binding site. Residues Ser-42, His-79, and 125-127 (GSL) each bind thiamine diphosphate. Asp-157 contacts Mg(2+). Residues Gly-158 and Asn-187 each contribute to the thiamine diphosphate site. The Mg(2+) site is built by Asn-187 and Leu-189. Residues Lys-249 and His-263 each contribute to the thiamine diphosphate site. Substrate-binding residues include His-263, Arg-323, and Ser-350. 2 residues coordinate thiamine diphosphate: Glu-371 and Phe-397. Glu-371 acts as the Proton donor in catalysis. Residues His-421 and Asp-429 each contribute to the substrate site. Residue Gln-433 coordinates thiamine diphosphate. Arg-479 provides a ligand contact to substrate.

This sequence belongs to the transketolase family. Homodimer. Mg(2+) is required as a cofactor. Requires Ca(2+) as cofactor. Mn(2+) serves as cofactor. It depends on Co(2+) as a cofactor. The cofactor is thiamine diphosphate.

The enzyme catalyses D-sedoheptulose 7-phosphate + D-glyceraldehyde 3-phosphate = aldehydo-D-ribose 5-phosphate + D-xylulose 5-phosphate. Plays an essential role in total transketolase activity and cell proliferation in cancer cells; after transfection with anti-TKTL1 siRNA, total transketolase activity dramatically decreases and proliferation was significantly inhibited in cancer cells. Plays a pivotal role in carcinogenesis. The sequence is that of Transketolase-like protein 2 (Tktl2) from Mus musculus (Mouse).